An 84-amino-acid polypeptide reads, in one-letter code: Cell division topological specificity factor (84 aa).

The protein belongs to the MinE family.

Functionally, prevents the cell division inhibition by proteins MinC and MinD at internal division sites while permitting inhibition at polar sites. This ensures cell division at the proper site by restricting the formation of a division septum at the midpoint of the long axis of the cell. The polypeptide is Cell division topological specificity factor (Cupriavidus taiwanensis (strain DSM 17343 / BCRC 17206 / CCUG 44338 / CIP 107171 / LMG 19424 / R1) (Ralstonia taiwanensis (strain LMG 19424))).